Reading from the N-terminus, the 446-residue chain is Phosphoglucosamine mutase (446 aa).

Serine 101 (phosphoserine intermediate) is an active-site residue. Mg(2+) contacts are provided by serine 101, aspartate 240, aspartate 242, and aspartate 244. Serine 101 carries the post-translational modification Phosphoserine.

This sequence belongs to the phosphohexose mutase family. The cofactor is Mg(2+). Post-translationally, activated by phosphorylation.

It catalyses the reaction alpha-D-glucosamine 1-phosphate = D-glucosamine 6-phosphate. Functionally, catalyzes the conversion of glucosamine-6-phosphate to glucosamine-1-phosphate. The polypeptide is Phosphoglucosamine mutase (Pseudomonas entomophila (strain L48)).